Consider the following 203-residue polypeptide: Protein GrpE (203 aa).

Over residues 1–10 (MSNESIKAEQ) the composition is skewed to basic and acidic residues. The disordered stretch occupies residues 1-20 (MSNESIKAEQDLIQEGVESE).

This sequence belongs to the GrpE family. Homodimer.

The protein localises to the cytoplasm. Functionally, participates actively in the response to hyperosmotic and heat shock by preventing the aggregation of stress-denatured proteins, in association with DnaK and GrpE. It is the nucleotide exchange factor for DnaK and may function as a thermosensor. Unfolded proteins bind initially to DnaJ; upon interaction with the DnaJ-bound protein, DnaK hydrolyzes its bound ATP, resulting in the formation of a stable complex. GrpE releases ADP from DnaK; ATP binding to DnaK triggers the release of the substrate protein, thus completing the reaction cycle. Several rounds of ATP-dependent interactions between DnaJ, DnaK and GrpE are required for fully efficient folding. The polypeptide is Protein GrpE (Shewanella sp. (strain MR-4)).